Here is a 137-residue protein sequence, read N- to C-terminus: Large-conductance mechanosensitive channel (137 aa).

2 helical membrane-spanning segments follow: residues 10–30 (FAMRGNVVDLAVGVIIGAAFG) and 76–96 (GVFIQNVFDFLIVAFAIFMAI).

It belongs to the MscL family. Homopentamer.

It is found in the cell inner membrane. In terms of biological role, channel that opens in response to stretch forces in the membrane lipid bilayer. May participate in the regulation of osmotic pressure changes within the cell. The sequence is that of Large-conductance mechanosensitive channel from Escherichia coli O45:K1 (strain S88 / ExPEC).